Consider the following 94-residue polypeptide: MSRSAWKPPFCHPSVLRLVNRALKQGSINKVIKIHSRASVILPNCLGLKFAVYNGKDYIPVSVNDQNMIGHKFGEFSPTRKFAGHNGDKKAVRR.

Belongs to the universal ribosomal protein uS19 family.

Its function is as follows. Protein S19 forms a complex with S13 that binds strongly to the 16S ribosomal RNA. The sequence is that of Small ribosomal subunit protein uS19 from Wolbachia sp. subsp. Brugia malayi (strain TRS).